The chain runs to 208 residues: Protein-L-isoaspartate O-methyltransferase (208 aa).

The active site involves serine 59.

The protein belongs to the methyltransferase superfamily. L-isoaspartyl/D-aspartyl protein methyltransferase family.

The protein resides in the cytoplasm. The enzyme catalyses [protein]-L-isoaspartate + S-adenosyl-L-methionine = [protein]-L-isoaspartate alpha-methyl ester + S-adenosyl-L-homocysteine. In terms of biological role, catalyzes the methyl esterification of L-isoaspartyl residues in peptides and proteins that result from spontaneous decomposition of normal L-aspartyl and L-asparaginyl residues. It plays a role in the repair and/or degradation of damaged proteins. In Pectobacterium atrosepticum (strain SCRI 1043 / ATCC BAA-672) (Erwinia carotovora subsp. atroseptica), this protein is Protein-L-isoaspartate O-methyltransferase.